The sequence spans 151 residues: Putative pre-16S rRNA nuclease (151 aa).

It belongs to the YqgF nuclease family.

Its subcellular location is the cytoplasm. Could be a nuclease involved in processing of the 5'-end of pre-16S rRNA. The polypeptide is Putative pre-16S rRNA nuclease (Paraburkholderia phymatum (strain DSM 17167 / CIP 108236 / LMG 21445 / STM815) (Burkholderia phymatum)).